The sequence spans 287 residues: Festuclavine synthase II (287 aa).

This sequence belongs to the fgaFS/easG family.

The enzyme catalyses festuclavine + NAD(+) = 6,8-dimethyl-6,7-didehydroergoline + NADH + H(+). The protein operates within alkaloid biosynthesis; ergot alkaloid biosynthesis. In terms of biological role, festuclavine synthase; part of the gene cluster that mediates the biosynthesis of isofumigaclavines, fungal ergot alkaloids. The tryptophan dimethylallyltransferase ifgA catalyzes the first step of ergot alkaloid biosynthesis by condensing dimethylallyl diphosphate (DMAP) and tryptophan to form 4-dimethylallyl-L-tryptophan. The second step is catalyzed by the methyltransferase ifgB that methylates 4-dimethylallyl-L-tryptophan in the presence of S-adenosyl-L-methionine, resulting in the formation of N-methyl-dimethylallyl-L-tryptophan. The catalase ifgD and the FAD-dependent oxidoreductase ifgC then transform N-methyl-dimethylallyl-L-tryptophan to chanoclavine-I which is further oxidized by ifgE in the presence of NAD(+), resulting in the formation of chanoclavine-I aldehyde. The chanoclavine-I aldehyde reductases ifgG and/or fgaOx3 reduce chanoclavine-I aldehyde to dihydrochanoclavine-I aldehyde that spontaneously dehydrates to form 6,8-dimethyl-6,7-didehydroergoline. The festuclavine dehydrogenases ifgF1 and/or ifgF2 then catalyze the reduction of 6,8-dimethyl-6,7-didehydroergoline to form festuclavine. Hydrolysis of festuclavine by a yet undetermined cytochrome P450 monooxygenase (called ifgH) then leads to the formation of isofumigaclavine B which is in turn acetylated by ifgI to isofumigaclavine A. Penicillium roqueforti has interestingly at least two sets of genes for the consumption of chanoclavine-I aldehyde on three different loci, the OYEs ifgG/fgaOx3 and the festuclavine synthase homologs ifgF1/ifgF2. The reason for the duplication of these genes is unclear, probably to ensure the conversion of chanoclavine-I aldehyde by differential gene expression under various environmental conditions. This chain is Festuclavine synthase II, found in Penicillium roqueforti (strain FM164).